The primary structure comprises 259 residues: DNA-directed RNA polymerase 30 kDa polypeptide (259 aa).

Residues 155 to 195 (YNTPCPNCKSRNTTPMMIQTRAADEPPLVRHACRDCKQHFK) form a TFIIS-type zinc finger. Zn(2+)-binding residues include Cys159, Cys162, Cys187, and Cys190. The interval 220–259 (EILPDNNPSPPESPEPASPIDDGLIRATFDRNDEPPEDDE) is disordered. The segment covering 226-236 (NPSPPESPEPA) has biased composition (pro residues).

The protein belongs to the poxviridae DNA-directed RNA polymerase 30 kDa subunit family. In terms of assembly, the DNA-dependent RNA polymerase (vRNAP) consists of eight subunits encoded by early viral genes and termed according to their apparent molecular masses Rpo147, Rpo132, Rpo35, Rpo30, Rpo22, Rpo19, Rpo18, and Rpo7. The same holoenzyme, with the addition of the transcription-specificity factor RAP94, is used for early gene expression.

It localises to the virion. The protein resides in the host cytoplasm. The catalysed reaction is RNA(n) + a ribonucleoside 5'-triphosphate = RNA(n+1) + diphosphate. Part of the DNA-dependent RNA polymerase which catalyzes the transcription of viral DNA into RNA using the four ribonucleoside triphosphates as substrates. Responsible for the transcription of early, intermediate and late genes. DNA-dependent RNA polymerase associates with the early transcription factor (ETF), itself composed of OPG118 and OPG134, thereby allowing the early genes transcription. Late transcription, and probably also intermediate transcription, require newly synthesized RNA polymerase. This chain is DNA-directed RNA polymerase 30 kDa polypeptide (OPG066), found in Homo sapiens (Human).